A 282-amino-acid chain; its full sequence is tRNA uridine(34) hydroxylase (282 aa).

Positions 128–222 (EGRPVVMLDT…YFEEVGGSHY (95 aa)) constitute a Rhodanese domain. The active-site Cysteine persulfide intermediate is Cys-182.

The protein belongs to the TrhO family.

The enzyme catalyses uridine(34) in tRNA + AH2 + O2 = 5-hydroxyuridine(34) in tRNA + A + H2O. Catalyzes oxygen-dependent 5-hydroxyuridine (ho5U) modification at position 34 in tRNAs. This Cupriavidus taiwanensis (strain DSM 17343 / BCRC 17206 / CCUG 44338 / CIP 107171 / LMG 19424 / R1) (Ralstonia taiwanensis (strain LMG 19424)) protein is tRNA uridine(34) hydroxylase.